The primary structure comprises 589 residues: V-type ATP synthase alpha chain 1 (589 aa).

239–246 is an ATP binding site; sequence GPFGAGKT.

The protein belongs to the ATPase alpha/beta chains family.

The catalysed reaction is ATP + H2O + 4 H(+)(in) = ADP + phosphate + 5 H(+)(out). In terms of biological role, produces ATP from ADP in the presence of a proton gradient across the membrane. The V-type alpha chain is a catalytic subunit. The sequence is that of V-type ATP synthase alpha chain 1 (atpA1) from Treponema pallidum (strain Nichols).